The sequence spans 299 residues: tRNA uridine(34) hydroxylase (299 aa).

In terms of domain architecture, Rhodanese spans 132–226; the sequence is AGRPVVMLDT…YFEEVGGAHY (95 aa). Cysteine 186 serves as the catalytic Cysteine persulfide intermediate.

It belongs to the TrhO family.

It catalyses the reaction uridine(34) in tRNA + AH2 + O2 = 5-hydroxyuridine(34) in tRNA + A + H2O. Catalyzes oxygen-dependent 5-hydroxyuridine (ho5U) modification at position 34 in tRNAs. The protein is tRNA uridine(34) hydroxylase of Burkholderia mallei (strain NCTC 10247).